The primary structure comprises 226 residues: NADH-quinone oxidoreductase subunit B 2 (226 aa).

[4Fe-4S] cluster contacts are provided by cysteine 37, cysteine 38, cysteine 103, and cysteine 132.

The protein belongs to the complex I 20 kDa subunit family. In terms of assembly, NDH-1 is composed of 14 different subunits. Subunits NuoB, C, D, E, F, and G constitute the peripheral sector of the complex. It depends on [4Fe-4S] cluster as a cofactor.

It is found in the cell membrane. It catalyses the reaction a quinone + NADH + 5 H(+)(in) = a quinol + NAD(+) + 4 H(+)(out). Functionally, NDH-1 shuttles electrons from NADH, via FMN and iron-sulfur (Fe-S) centers, to quinones in the respiratory chain. The immediate electron acceptor for the enzyme in this species is believed to be a menaquinone. Couples the redox reaction to proton translocation (for every two electrons transferred, four hydrogen ions are translocated across the cytoplasmic membrane), and thus conserves the redox energy in a proton gradient. This Salinispora arenicola (strain CNS-205) protein is NADH-quinone oxidoreductase subunit B 2.